The primary structure comprises 273 residues: Glutamate 5-kinase (273 aa).

An ATP-binding site is contributed by Lys15. Substrate-binding residues include Ser55, Asp142, and Asn158. ATP contacts are provided by residues Ser178–Asp179 and Thr220–Lys226.

This sequence belongs to the glutamate 5-kinase family.

The protein localises to the cytoplasm. It catalyses the reaction L-glutamate + ATP = L-glutamyl 5-phosphate + ADP. It functions in the pathway amino-acid biosynthesis; L-proline biosynthesis; L-glutamate 5-semialdehyde from L-glutamate: step 1/2. Its function is as follows. Catalyzes the transfer of a phosphate group to glutamate to form L-glutamate 5-phosphate. The polypeptide is Glutamate 5-kinase (Streptococcus pyogenes serotype M6 (strain ATCC BAA-946 / MGAS10394)).